The following is a 4561-amino-acid chain: StAR-related lipid transfer protein 9 (4561 aa).

The region spanning 3–384 (NVQVAVRVRP…MRYASNAKNI (382 aa)) is the Kinesin motor domain. 103–110 (GQTGSGKT) is an ATP binding site. Over residues 307-321 (SSGGDSGVPSTTSGA) the composition is skewed to low complexity. The interval 307–330 (SSGGDSGVPSTTSGASSGGGPARR) is disordered. In terms of domain architecture, FHA spans 482–533 (TKIGRIDSDQEQDIVLQGQWIERDHCTITSTCGVVILRPTQGARCTVNGREV). Disordered regions lie at residues 784–805 (SRAP…RRSR), 873–1064 (SRWR…DTES), and 1092–1153 (WNLP…PSDS). Polar residues-rich tracts occupy residues 789 to 805 (WASS…RRSR), 884 to 903 (ASTQ…SQEI), 911 to 920 (CQMSSQGQST), and 939 to 948 (RWASVNTKTG). Composition is skewed to basic and acidic residues over residues 1046 to 1060 (RPIK…RDLS) and 1124 to 1135 (SRGEYSMKDHGH). The residue at position 1164 (serine 1164) is a Phosphoserine. Disordered stretches follow at residues 1288 to 1392 (PSGD…SDMS), 1700 to 1767 (REAW…EEEN), 1959 to 1980 (ECKA…EEKQ), 2077 to 2120 (TNAT…ADRL), 2320 to 2356 (LATG…LGGS), 2384 to 2427 (VSTS…SSLD), 2439 to 2467 (FLLQ…LPNS), 2622 to 2656 (KPRQ…DPLP), 2712 to 2735 (KDSI…SEKI), 2777 to 2800 (TGLE…GNVG), 3002 to 3067 (RSVE…PGTL), 3185 to 3207 (AQTE…REQL), 3246 to 3286 (ELNL…TSLK), 3645 to 3703 (EGAA…LRPE), 3790 to 3847 (SDLA…PQQS), and 3863 to 3913 (QPKT…GRTT). Basic and acidic residues predominate over residues 1300 to 1321 (DIHEIQPHDEKPKHWLSIEEPK). 2 stretches are compositionally biased toward polar residues: residues 1328-1360 (LPQS…SQGL) and 1722-1741 (PKLS…TTTK). 2 stretches are compositionally biased toward basic and acidic residues: residues 1754-1767 (ELGK…EEEN) and 1970-1980 (QSKEEPLEEKQ). The span at 2077–2091 (TNATSNNNTQIQKLT) shows a compositional bias: polar residues. Positions 2096–2110 (RSREYVQTRESESEH) are enriched in basic and acidic residues. Polar residues-rich tracts occupy residues 2333-2351 (TRSS…TTHT) and 2399-2408 (TSTGSTTQEA). Residues 2414–2463 (EATVQKERKNSSLDRISRQAEKRVSFLLQEDSNQGEEERQKAEETSEDQQ) adopt a coiled-coil conformation. The segment covering 2417 to 2427 (VQKERKNSSLD) has biased composition (basic and acidic residues). Basic and acidic residues predominate over residues 2634–2647 (DSSEVIEKRKEASR). Polar residues-rich tracts occupy residues 3039–3054 (LKNN…SQTM) and 3187–3199 (TEPS…THSQ). Residues 3689 to 3700 (PASPDGSPPPSL) show a composition bias toward pro residues. The segment covering 3812-3835 (DSQRAESLDREGKSPLGKSSERLL) has biased composition (basic and acidic residues). Residues 3863–3874 (QPKTTTGDQSKL) are compositionally biased toward polar residues. Residues 4185 to 4224 (SDIELMLQEYRRAREEAKVEIAQARDRLKERTEQEKMRIR) are a coiled coil. Residues 4344 to 4561 (PYQDLAKHIV…VAKLASFLRS (218 aa)) enclose the START domain.

The protein belongs to the TRAFAC class myosin-kinesin ATPase superfamily. Kinesin family. In terms of assembly, interacts with ATAD3A.

Its subcellular location is the cytoplasm. It is found in the cytoskeleton. The protein resides in the microtubule organizing center. The protein localises to the centrosome. It localises to the centriole. Its subcellular location is the nucleus. In terms of biological role, microtubule-dependent motor protein required for spindle pole assembly during mitosis. Required to stabilize the pericentriolar material (PCM). The protein is StAR-related lipid transfer protein 9 (Stard9) of Mus musculus (Mouse).